A 447-amino-acid chain; its full sequence is Phosphoglucosamine mutase (447 aa).

The active-site Phosphoserine intermediate is the Ser-103. 4 residues coordinate Mg(2+): Ser-103, Asp-242, Asp-244, and Asp-246. A Phosphoserine modification is found at Ser-103.

This sequence belongs to the phosphohexose mutase family. It depends on Mg(2+) as a cofactor. Post-translationally, activated by phosphorylation.

It catalyses the reaction alpha-D-glucosamine 1-phosphate = D-glucosamine 6-phosphate. In terms of biological role, catalyzes the conversion of glucosamine-6-phosphate to glucosamine-1-phosphate. The sequence is that of Phosphoglucosamine mutase from Marinobacter nauticus (strain ATCC 700491 / DSM 11845 / VT8) (Marinobacter aquaeolei).